The sequence spans 195 residues: Interferon omega-1 (195 aa).

The segment at residues 1–21 is a signal peptide (or 23 in some molecules); it reads MALLFPLLAALVMTSYSPVGS. 2 disulfides stabilise this stretch: Cys-24-Cys-122 and Cys-52-Cys-162. Asn-101 carries N-linked (GlcNAc...) asparagine glycosylation.

The protein belongs to the alpha/beta interferon family.

It localises to the secreted. The protein is Interferon omega-1 (IFNW1) of Homo sapiens (Human).